A 439-amino-acid polypeptide reads, in one-letter code: Glucose-1-phosphate adenylyltransferase (439 aa).

Alpha-D-glucose 1-phosphate contacts are provided by residues Tyr116, Gly182, 197 to 198 (EK), and Ser215.

The protein belongs to the bacterial/plant glucose-1-phosphate adenylyltransferase family. As to quaternary structure, homotetramer.

The enzyme catalyses alpha-D-glucose 1-phosphate + ATP + H(+) = ADP-alpha-D-glucose + diphosphate. The protein operates within glycan biosynthesis; glycogen biosynthesis. In terms of biological role, involved in the biosynthesis of ADP-glucose, a building block required for the elongation reactions to produce glycogen. Catalyzes the reaction between ATP and alpha-D-glucose 1-phosphate (G1P) to produce pyrophosphate and ADP-Glc. In Pasteurella multocida (strain Pm70), this protein is Glucose-1-phosphate adenylyltransferase.